The following is a 1062-amino-acid chain: Platelet-derived growth factor receptor alpha (1062 aa).

Residues methionine 1–leucine 27 form the signal peptide. Ig-like C2-type domains lie at threonine 28 to proline 96, isoleucine 91 to tryptophan 184, leucine 190 to alanine 281, serine 287 to serine 381, and proline 389 to valine 493. Topologically, residues threonine 28–alanine 504 are extracellular. Cysteine 29 and cysteine 74 are joined by a disulfide. N-linked (GlcNAc...) asparagine glycosylation is found at asparagine 79 and asparagine 132. Disulfide bonds link cysteine 124–cysteine 165 and cysteine 211–cysteine 265. Asparagine 273, asparagine 333, asparagine 366, asparagine 433, and asparagine 444 each carry an N-linked (GlcNAc...) asparagine glycan. Cysteine 410 and cysteine 477 are joined by a disulfide. The chain crosses the membrane as a helical span at residues alanine 505 to tryptophan 525. At lysine 526–leucine 1062 the chain is on the cytoplasmic side. Phosphotyrosine; by autocatalysis is present on residues tyrosine 548 and tyrosine 550. The 377-residue stretch at leucine 569 to leucine 945 folds into the Protein kinase domain. ATP-binding positions include leucine 575–valine 583 and lysine 603. Phosphotyrosine; by autocatalysis is present on residues tyrosine 697, tyrosine 708, tyrosine 719, tyrosine 731, and tyrosine 739. The segment at leucine 734–aspartate 754 is disordered. Aspartate 793 functions as the Proton acceptor in the catalytic mechanism. Residues tyrosine 824 and tyrosine 963 each carry the phosphotyrosine; by autocatalysis modification. Over residues lysine 975 to leucine 986 the composition is skewed to basic and acidic residues. The interval lysine 975–lysine 1034 is disordered. Tyrosine 992 carries the post-translational modification Phosphotyrosine; by autocatalysis. Residues serine 1014–phenylalanine 1032 are compositionally biased toward polar residues.

It belongs to the protein kinase superfamily. Tyr protein kinase family. CSF-1/PDGF receptor subfamily. In terms of assembly, interacts with homodimeric pdgfa, pdgfb and pdgfc, and with heterodimers formed by pdgfa and pdgfb. monomer in the absence of bound ligand. Interaction with dimeric pdgfa, pdgfb and/or pdgfc leads to receptor dimerization, where both pdgfra homodimers and heterodimers with pdgfrb are observed. Ubiquitinated, leading to its degradation. In terms of processing, autophosphorylated on tyrosine residues upon ligand binding. Autophosphorylation occurs in trans, i.e. one subunit of the dimeric receptor phosphorylates tyrosine residues on the other subunit.

The protein localises to the cell membrane. It catalyses the reaction L-tyrosyl-[protein] + ATP = O-phospho-L-tyrosyl-[protein] + ADP + H(+). Present in an inactive conformation in the absence of bound ligand. Binding of pdgfa and/or pdgfb leads to dimerization and activation by autophosphorylation on tyrosine residues. Tyrosine-protein kinase that acts as a cell-surface receptor for pdgfa, pdgfb and pdgfc and plays an essential role in the regulation of embryonic development, cell proliferation, survival and chemotaxis. Depending on the context, promotes or inhibits cell proliferation and cell migration. Plays an important role in the differentiation of bone marrow-derived mesenchymal stem cells. Required for normal skeleton development. Required for normal development of the gastrointestinal tract. Plays a role in cell migration and chemotaxis in wound healing. Plays a role in platelet activation, secretion of agonists from platelet granules, and in thrombin-induced platelet aggregation. Binding of its cognate ligands - homodimeric pdgfa, homodimeric pdgfb, heterodimers formed by pdgfa and pdgfb or homodimeric pdgfc -leads to the activation of several signaling cascades; the response depends on the nature of the bound ligand and is modulated by the formation of heterodimers between pdgfra and pdgfrb. Phosphorylates pik3r1, plcg1, and ptpn11. Activation of plcg1 leads to the production of the cellular signaling molecules diacylglycerol and inositol 1,4,5-trisphosphate, mobilization of cytosolic Ca(2+) and the activation of protein kinase C. Phosphorylates pik3r1, the regulatory subunit of phosphatidylinositol 3-kinase, and thereby mediates activation of the AKT1 signaling pathway. Mediates activation of hras and of the MAP kinases mapk1/erk2 and/or mapk3/erk1. Promotes activation of STAT family members stat1, stat3 and stat5a and/or stat5b. Receptor signaling is down-regulated by protein phosphatases that dephosphorylate the receptor and its down-stream effectors, and by rapid internalization of the activated receptor. This Takifugu rubripes (Japanese pufferfish) protein is Platelet-derived growth factor receptor alpha (pdgfra).